Reading from the N-terminus, the 438-residue chain is GTPase Der (438 aa).

EngA-type G domains follow at residues 4-168 (PIVA…KNEG) and 177-352 (IKIA…DNYC). GTP contacts are provided by residues 10–17 (GRPNVGKS), 57–61 (DTGGI), 120–123 (NKID), 183–190 (GKPNVGKS), 230–234 (DTAGV), and 295–298 (NKWD). Residues 353–437 (KQIKTGILND…GIKLEFRERK (85 aa)) form the KH-like domain.

This sequence belongs to the TRAFAC class TrmE-Era-EngA-EngB-Septin-like GTPase superfamily. EngA (Der) GTPase family. As to quaternary structure, associates with the 50S ribosomal subunit.

In terms of biological role, GTPase that plays an essential role in the late steps of ribosome biogenesis. The sequence is that of GTPase Der from Clostridium kluyveri (strain NBRC 12016).